A 142-amino-acid chain; its full sequence is Large ribosomal subunit protein bL17 (142 aa).

Belongs to the bacterial ribosomal protein bL17 family. As to quaternary structure, part of the 50S ribosomal subunit. Contacts protein L32.

The protein is Large ribosomal subunit protein bL17 of Brucella abortus (strain S19).